The primary structure comprises 226 residues: Leucyl/phenylalanyl-tRNA--protein transferase (226 aa).

This sequence belongs to the L/F-transferase family.

The protein resides in the cytoplasm. It catalyses the reaction N-terminal L-lysyl-[protein] + L-leucyl-tRNA(Leu) = N-terminal L-leucyl-L-lysyl-[protein] + tRNA(Leu) + H(+). The catalysed reaction is N-terminal L-arginyl-[protein] + L-leucyl-tRNA(Leu) = N-terminal L-leucyl-L-arginyl-[protein] + tRNA(Leu) + H(+). It carries out the reaction L-phenylalanyl-tRNA(Phe) + an N-terminal L-alpha-aminoacyl-[protein] = an N-terminal L-phenylalanyl-L-alpha-aminoacyl-[protein] + tRNA(Phe). In terms of biological role, functions in the N-end rule pathway of protein degradation where it conjugates Leu, Phe and, less efficiently, Met from aminoacyl-tRNAs to the N-termini of proteins containing an N-terminal arginine or lysine. The chain is Leucyl/phenylalanyl-tRNA--protein transferase from Ectopseudomonas mendocina (strain ymp) (Pseudomonas mendocina).